Reading from the N-terminus, the 342-residue chain is Endoplasmic reticulum junction formation protein lunapark-1 (342 aa).

Topologically, residues 1–39 (MGNLFSRNKSPATELERVALSIDDLKKRLQTISSSNTNT) are cytoplasmic. Positions 13-34 (TELERVALSIDDLKKRLQTISS) form a coiled coil. Residues 40–60 (LYYYYMSIVVILSIAMAHTWL) form a helical membrane-spanning segment. The Lumenal portion of the chain corresponds to 61–68 (RFEDPQKT). The chain crosses the membrane as a helical span at residues 69–89 (YVACALMLGAIGIVLAGRYVI). The Cytoplasmic segment spans residues 90–342 (NGFFSWRTNR…ESKTMETEFH (253 aa)). A coiled-coil region spans residues 102-136 (QKLENAISQKTTLLDLVKETLKFKEAKEILDRYEK). Residues 161–191 (ADSSMFATPKQEQKRVETPTAQGPNSAMNSM) form a disordered region. Polar residues predominate over residues 179 to 191 (PTAQGPNSAMNSM). A C4-type; plays a role in ER morphology zinc finger spans residues 236–261 (CSICHTHNGMSTPAEYPYISFRCFEC). A disordered region spans residues 278–342 (RPPMGPKGIQ…ESKTMETEFH (65 aa)). A compositionally biased stretch (polar residues) spans 295–321 (SENTHNMMENQKPSTDLTPSASQNGSE). Over residues 322–342 (KGSDSENEKVPESKTMETEFH) the composition is skewed to basic and acidic residues.

The protein belongs to the lunapark family. In terms of tissue distribution, expressed in cell bodies along the ventral cord around the pharynx and the tail both in larvae and adults. Also expressed in muscles and hypodermal cells.

Its subcellular location is the endoplasmic reticulum membrane. Plays a role in tubular endoplasmic reticulum network formation and maintenance. May be involved in central nervous system development. Has a presynaptic role in neurotransmission. Likely to operate in synaptogenesis by regulating vesicular transport or localization. Required for correct localization of rab-3 and snb-1. The chain is Endoplasmic reticulum junction formation protein lunapark-1 (lnp-1) from Caenorhabditis elegans.